We begin with the raw amino-acid sequence, 293 residues long: Protease HtpX (293 aa).

2 consecutive transmembrane segments (helical) span residues 4–24 (IALFLLTNLGVMVVFGLILSL) and 32–52 (VMGLMIMAGLFGFGGAFVSLL). Residue H139 participates in Zn(2+) binding. E140 is a catalytic residue. H143 is a binding site for Zn(2+). The next 2 membrane-spanning stretches (helical) occupy residues 158-178 (IVNTFVIFISRILAQLAAGFM) and 193-213 (MVYFVVSMVLELVFGIVASTI). E222 serves as a coordination point for Zn(2+).

This sequence belongs to the peptidase M48B family. The cofactor is Zn(2+).

It is found in the cell inner membrane. The chain is Protease HtpX from Erwinia tasmaniensis (strain DSM 17950 / CFBP 7177 / CIP 109463 / NCPPB 4357 / Et1/99).